The primary structure comprises 40 residues: Photosystem II reaction center protein J (40 aa).

Residues 8–28 (IPLWMIGTLAGILVISLIGIF) form a helical membrane-spanning segment.

It belongs to the PsbJ family. In terms of assembly, PSII is composed of 1 copy each of membrane proteins PsbA, PsbB, PsbC, PsbD, PsbE, PsbF, PsbH, PsbI, PsbJ, PsbK, PsbL, PsbM, PsbT, PsbX, PsbY, PsbZ, Psb30/Ycf12, at least 3 peripheral proteins of the oxygen-evolving complex and a large number of cofactors. It forms dimeric complexes.

Its subcellular location is the plastid membrane. Functionally, one of the components of the core complex of photosystem II (PSII). PSII is a light-driven water:plastoquinone oxidoreductase that uses light energy to abstract electrons from H(2)O, generating O(2) and a proton gradient subsequently used for ATP formation. It consists of a core antenna complex that captures photons, and an electron transfer chain that converts photonic excitation into a charge separation. This chain is Photosystem II reaction center protein J, found in Cuscuta gronovii (Common dodder).